The chain runs to 276 residues: Diaminopimelate epimerase (276 aa).

Positions 13, 46, and 66 each coordinate substrate. Cys-75 (proton donor) is an active-site residue. Substrate is bound by residues 76 to 77, Asn-159, Asn-192, and 210 to 211; these read GN and ER. The active-site Proton acceptor is Cys-219. Position 220–221 (220–221) interacts with substrate; that stretch reads GT.

The protein belongs to the diaminopimelate epimerase family. As to quaternary structure, homodimer.

It is found in the cytoplasm. The catalysed reaction is (2S,6S)-2,6-diaminopimelate = meso-2,6-diaminopimelate. It participates in amino-acid biosynthesis; L-lysine biosynthesis via DAP pathway; DL-2,6-diaminopimelate from LL-2,6-diaminopimelate: step 1/1. Catalyzes the stereoinversion of LL-2,6-diaminopimelate (L,L-DAP) to meso-diaminopimelate (meso-DAP), a precursor of L-lysine and an essential component of the bacterial peptidoglycan. This chain is Diaminopimelate epimerase, found in Pseudomonas savastanoi pv. phaseolicola (strain 1448A / Race 6) (Pseudomonas syringae pv. phaseolicola (strain 1448A / Race 6)).